Consider the following 155-residue polypeptide: Acyl-CoA-binding domain-containing protein 3 (155 aa).

An ACB domain is found at 3–88 (LQEDFEEYAE…VKQLQEEAAA (86 aa)). An acyl-CoA contacts are provided by residues Lys15, 30-34 (YGLYK), Lys56, and Tyr75.

The protein belongs to the ACBP family. In terms of tissue distribution, highly expressed in leaves. Expressed at low levels in roots and seeds.

It is found in the cytoplasm. The protein localises to the cytosol. Functionally, binds medium- and long-chain acyl-CoA esters with high affinity. Can interact in vitro with linolenoyl-CoA. Binds phosphatidic acid (PA) and phosphatidylcholine (PC) in vitro. May play a role in the biosynthesis of phospholipids. The sequence is that of Acyl-CoA-binding domain-containing protein 3 from Oryza sativa subsp. japonica (Rice).